Consider the following 238-residue polypeptide: Protein lifeguard 4 (238 aa).

Residues 1-38 (MADTDPGYPRSSIEDDFNYGSCVASASVHIRMAFLRKV) are Cytoplasmic-facing. The helical transmembrane segment at 39-59 (YSILSLQVLLTTVTSALFLYF) threads the bilayer. Over 60–68 (QALRTFVHE) the chain is Lumenal. Residues 69-89 (SPALIVVFALGSLGLIFALTL) form a helical membrane-spanning segment. The Cytoplasmic portion of the chain corresponds to 90–97 (HRHTHPLN). The helical transmembrane segment at 98–118 (LYLLFAFTLSESLAVAAVVTF) threads the bilayer. Over 119 to 120 (YD) the chain is Lumenal. Residues 121-141 (VYLVLQAFIMTTAVFLGLTAY) form a helical membrane-spanning segment. Residues 142–151 (TLQSKRDFTK) are Cytoplasmic-facing. The helical transmembrane segment at 152 to 172 (FGAGLFAGLWILCLAGFLKLF) threads the bilayer. Topologically, residues 173–175 (FYS) are lumenal. The helical transmembrane segment at 176–196 (ETMELVLASLGALLFCGFIIY) threads the bilayer. Residues 197–208 (DTHSLMHRLSPE) lie on the Cytoplasmic side of the membrane. An intramembrane region (helical) is located at residues 209 to 229 (EYVIAAISLYMDIINLFLHLL). Topologically, residues 230–238 (KFLEAVNKK) are cytoplasmic.

The protein belongs to the BI1 family. LFG subfamily. As to quaternary structure, interacts with ITPR3.

Its subcellular location is the golgi apparatus membrane. Functionally, anti-apoptotic protein which can inhibit apoptosis induced by intrinsic and extrinsic apoptotic stimuli. Can modulate both capacitative Ca2+ entry and inositol 1,4,5-trisphosphate (IP3)-mediated Ca2+ release. The chain is Protein lifeguard 4 (Tmbim4) from Mus musculus (Mouse).